The primary structure comprises 938 residues: AP-4 complex subunit epsilon (938 aa).

HEAT repeat units follow at residues 118 to 153 (DLIILIVNTIQKDLRSDNYLVVCAALNAICRLINEE), 154 to 190 (TIPAVLPQVVELLNHQKEAVRKKAIMALHRFHRKSPS), 192 to 227 (VSHLVSNFRKRLCDNDPGVMGATLCPLFDLISEDVN), 234 to 272 (SSFVSILKQVTERRLPKSYDYHQMPAPFIQIKLLKIMAL), 321 to 358 (KLLEAAADAISKFLKSDSHNLKYMGIDGLGRLIKISPD), 359 to 395 (IAEQHQLAVIDCLEDPDDTLKRKTFELLYKMTKSSNV), 397 to 431 (VIVDRMIDYMISINDNHYKTEIASRCVELAEQFAP), 454 to 495 (KVAH…EPKL), 517 to 556 (YSASYISGKLCDVADAYSSDETVKGYAVSALMKIYAFEIA), and 562 to 601 (DVLPECQSLIEELLASHSTDLQQRAYELQALLALDARAVE). Disordered regions lie at residues 690–712 (EPSYYSESHQPISTSLVSERESS), 725–867 (WGRP…VMGL), 880–912 (VDSLLSELSDSSKGNSRTYQPQTSKGPNTKEAL), and 919–938 (RQMGVNPTSQNPTLFKDLLG). Residues 694 to 706 (YSESHQPISTSLV) show a composition bias toward polar residues. Low complexity predominate over residues 728–744 (PSYQSTTAASSTTPQAA). A compositionally biased stretch (basic and acidic residues) spans 764-779 (SSYEPKKPEIDPEKQR). The segment covering 808–821 (ANKTATVPKENQTP) has biased composition (polar residues). 2 stretches are compositionally biased toward low complexity: residues 853–863 (DSSSQDGGSSD) and 880–891 (VDSLLSELSDSS). The stretch at 874–911 (VTTTTSVDSLLSELSDSSKGNSRTYQPQTSKGPNTKEA) is one HEAT 11 repeat. The span at 892–906 (KGNSRTYQPQTSKGP) shows a compositional bias: polar residues.

Belongs to the adaptor complexes large subunit family. In terms of assembly, adaptor protein complex 4 (AP-4) is a heterotetramer composed of two large adaptins (epsilon-type subunit and beta-type subunit), a medium adaptin (mu-type subunit) and a small adaptin (sigma-type subunit).

It localises to the golgi apparatus. The protein localises to the trans-Golgi network. Its subcellular location is the membrane. The protein resides in the coated pit. In terms of biological role, subunit of novel type of clathrin- or non-clathrin-associated protein coat involved in targeting proteins from the trans-Golgi network (TGN) to the endosomal-lysosomal system. The polypeptide is AP-4 complex subunit epsilon (Arabidopsis thaliana (Mouse-ear cress)).